The chain runs to 227 residues: Fibrillarin-like rRNA/tRNA 2'-O-methyltransferase (227 aa).

Residues 82 to 83 (TT), 100 to 101 (EF), 125 to 126 (DA), and 145 to 148 (DVAQ) contribute to the S-adenosyl-L-methionine site.

The protein belongs to the methyltransferase superfamily. Fibrillarin family. In terms of assembly, interacts with nop5. Component of box C/D small ribonucleoprotein (sRNP) particles that contain rpl7ae, FlpA and nop5, plus a guide RNA.

Involved in pre-rRNA and tRNA processing. Utilizes the methyl donor S-adenosyl-L-methionine to catalyze the site-specific 2'-hydroxyl methylation of ribose moieties in rRNA and tRNA. Site specificity is provided by a guide RNA that base pairs with the substrate. Methylation occurs at a characteristic distance from the sequence involved in base pairing with the guide RNA. In Methanosarcina acetivorans (strain ATCC 35395 / DSM 2834 / JCM 12185 / C2A), this protein is Fibrillarin-like rRNA/tRNA 2'-O-methyltransferase.